The sequence spans 241 residues: Uracil-DNA glycosylase (241 aa).

Asp71 functions as the Proton acceptor in the catalytic mechanism.

This sequence belongs to the uracil-DNA glycosylase (UDG) superfamily. UNG family.

Its subcellular location is the cytoplasm. The catalysed reaction is Hydrolyzes single-stranded DNA or mismatched double-stranded DNA and polynucleotides, releasing free uracil.. In terms of biological role, excises uracil residues from the DNA which can arise as a result of misincorporation of dUMP residues by DNA polymerase or due to deamination of cytosine. In Xanthomonas axonopodis pv. citri (strain 306), this protein is Uracil-DNA glycosylase.